Here is a 1072-residue protein sequence, read N- to C-terminus: Carbamoyl phosphate synthase large chain (1072 aa).

The tract at residues 1–401 (MPKRLDINTI…SLLKAVRSLE (401 aa)) is carboxyphosphate synthetic domain. ATP is bound by residues arginine 129, arginine 169, glycine 175, glycine 176, lysine 208, isoleucine 210, glutamate 215, glycine 241, valine 242, histidine 243, glutamine 284, and glutamate 298. The region spanning 133–327 (RTLMQELNEP…IAKLAAKIAV (195 aa)) is the ATP-grasp 1 domain. 3 residues coordinate Mg(2+): glutamine 284, glutamate 298, and asparagine 300. Positions 284, 298, and 300 each coordinate Mn(2+). Residues 402 to 546 (LGIYHLELDH…YSTYADENES (145 aa)) are oligomerization domain. A carbamoyl phosphate synthetic domain region spans residues 547–929 (IVTDRKSVVV…ALYKGLVASG (383 aa)). In terms of domain architecture, ATP-grasp 2 spans 671-861 (EAALTKLGIP…MANVATKVIL (191 aa)). 9 residues coordinate ATP: arginine 707, arginine 746, glutamate 752, glycine 777, valine 778, histidine 779, serine 780, glutamine 820, and glutamate 832. Residues glutamine 820, glutamate 832, and asparagine 834 each contribute to the Mg(2+) site. Residues glutamine 820, glutamate 832, and asparagine 834 each contribute to the Mn(2+) site. The region spanning 930–1072 (INIPTHGSVI…QTKRHEVVHA (143 aa)) is the MGS-like domain. The allosteric domain stretch occupies residues 930–1072 (INIPTHGSVI…QTKRHEVVHA (143 aa)).

This sequence belongs to the CarB family. In terms of assembly, composed of two chains; the small (or glutamine) chain promotes the hydrolysis of glutamine to ammonia, which is used by the large (or ammonia) chain to synthesize carbamoyl phosphate. Tetramer of heterodimers (alpha,beta)4. The cofactor is Mg(2+). Mn(2+) serves as cofactor.

The catalysed reaction is hydrogencarbonate + L-glutamine + 2 ATP + H2O = carbamoyl phosphate + L-glutamate + 2 ADP + phosphate + 2 H(+). The enzyme catalyses hydrogencarbonate + NH4(+) + 2 ATP = carbamoyl phosphate + 2 ADP + phosphate + 2 H(+). Its pathway is amino-acid biosynthesis; L-arginine biosynthesis; carbamoyl phosphate from bicarbonate: step 1/1. It participates in pyrimidine metabolism; UMP biosynthesis via de novo pathway; (S)-dihydroorotate from bicarbonate: step 1/3. Large subunit of the glutamine-dependent carbamoyl phosphate synthetase (CPSase). CPSase catalyzes the formation of carbamoyl phosphate from the ammonia moiety of glutamine, carbonate, and phosphate donated by ATP, constituting the first step of 2 biosynthetic pathways, one leading to arginine and/or urea and the other to pyrimidine nucleotides. The large subunit (synthetase) binds the substrates ammonia (free or transferred from glutamine from the small subunit), hydrogencarbonate and ATP and carries out an ATP-coupled ligase reaction, activating hydrogencarbonate by forming carboxy phosphate which reacts with ammonia to form carbamoyl phosphate. This chain is Carbamoyl phosphate synthase large chain, found in Bacillus cereus (strain AH820).